The sequence spans 1799 residues: 1,3-beta-glucan synthase component FKS1 (1799 aa).

Pro residues predominate over residues M1–K11. The interval M1 to P136 is disordered. The span at G12–P23 shows a compositional bias: low complexity. Positions G51–G64 are enriched in gly residues. Over residues A91 to P101 the composition is skewed to polar residues. 16 consecutive transmembrane segments (helical) span residues I431–Y451, L470–I490, L504–F524, V530–A550, F591–L611, V648–W668, N1268–L1288, C1323–L1343, L1422–I1442, G1446–I1466, I1527–I1547, I1563–L1583, A1605–L1625, L1635–F1655, D1704–F1724, and G1762–F1782.

This sequence belongs to the glycosyltransferase 48 family. Component of the 1,3-beta-glucan synthase (GS) complex composed of a catalytic subunit FKS1 and a regulatory subunit RHO1.

The protein localises to the cell membrane. It carries out the reaction [(1-&gt;3)-beta-D-glucosyl](n) + UDP-alpha-D-glucose = [(1-&gt;3)-beta-D-glucosyl](n+1) + UDP + H(+). Its activity is regulated as follows. Activated by magnesium ions. Inhibited by caspofungin and cilofungin. Its function is as follows. Catalytic subunit of the 1,3-beta-glucan synthase (GS) complex. Synthesizes 1,3-beta-glucan, a major structural component of the yeast cell wall. Involved in cell wall synthesis, maintenance and remodeling. This chain is 1,3-beta-glucan synthase component FKS1, found in Cryptococcus neoformans var. grubii serotype A (strain H99 / ATCC 208821 / CBS 10515 / FGSC 9487) (Filobasidiella neoformans var. grubii).